The primary structure comprises 855 residues: Suppressor of tumorigenicity 14 protein homolog (855 aa).

The disordered stretch occupies residues 1 to 21 (MKSERARRGAGGSGDLGAGFK). Residues 1–55 (MKSERARRGAGGSGDLGAGFKYTSRPENMNGCEEGVEFLPANNSSKVEKGGPRRW) lie on the Cytoplasmic side of the membrane. Ser-13 is subject to Phosphoserine. Residues 56–76 (VVLMAVLAAFLALSLLAGLLA) form a helical; Signal-anchor for type II membrane protein membrane-spanning segment. Residues 77-855 (WHFQDRNVRV…RDWIKAQIGV (779 aa)) lie on the Extracellular side of the membrane. An SEA domain is found at 86-203 (VQKIFNGYLS…TSVVAFPSDP (118 aa)). N-linked (GlcNAc...) asparagine glycosylation occurs at Asn-109. Cys-214 and Cys-244 are joined by a disulfide. 2 consecutive CUB domains span residues 214–334 (CSFA…FFQL) and 340–447 (CGGY…FLSF). N-linked (GlcNAc...) asparagine glycans are attached at residues Asn-302 and Asn-365. Intrachain disulfides connect Cys-340–Cys-366, Cys-397–Cys-410, Cys-453–Cys-464, Cys-459–Cys-477, Cys-471–Cys-486, Cys-488–Cys-501, Cys-496–Cys-514, Cys-508–Cys-523, Cys-525–Cys-537, Cys-532–Cys-550, Cys-544–Cys-559, Cys-567–Cys-579, Cys-574–Cys-593, Cys-587–Cys-602, and Cys-641–Cys-657. LDL-receptor class A domains follow at residues 452–487 (PCPGSFMCNTGRCIRKELRCDGWADCTDYSDELDCK), 487–524 (KCNATYQFTCRDKFCKPLFWVCDSVKDCEDGSDEEGCS), 524–560 (SCPPNTFKCGNGKCLPQSQQCDRKDDCGDGSDEAKCQ), and 566–603 (PCTEHTHRCLNGLCVDKSNPQCDGNEDCTDGSDEKDCD). An N-linked (GlcNAc...) asparagine glycan is attached at Asn-489. Positions 615-854 (VVGGENSDQG…FRDWIKAQIG (240 aa)) constitute a Peptidase S1 domain. Active-site charge relay system residues include His-656 and Asp-711. Asn-772 carries N-linked (GlcNAc...) asparagine glycosylation. 2 cysteine pairs are disulfide-bonded: Cys-776–Cys-790 and Cys-801–Cys-830. Catalysis depends on Ser-805, which acts as the Charge relay system.

The protein belongs to the peptidase S1 family. Interacts with CDCP1. May interact with TMEFF1.

The protein localises to the membrane. The catalysed reaction is Cleaves various synthetic substrates with Arg or Lys at the P1 position and prefers small side-chain amino acids, such as Ala and Gly, at the P2 position.. Its function is as follows. Exhibits trypsin-like activity as defined by cleavage of synthetic substrates with Arg or Lys as the P1 site. Involved in the terminal differentiation of keratinocytes through prostasin (PRSS8) activation and filaggrin (FLG) processing. Proteolytically cleaves and therefore activates TMPRSS13. The sequence is that of Suppressor of tumorigenicity 14 protein homolog (ST14) from Bos taurus (Bovine).